The sequence spans 291 residues: ATP synthase gamma chain (291 aa).

It belongs to the ATPase gamma chain family. As to quaternary structure, F-type ATPases have 2 components, CF(1) - the catalytic core - and CF(0) - the membrane proton channel. CF(1) has five subunits: alpha(3), beta(3), gamma(1), delta(1), epsilon(1). CF(0) has three main subunits: a, b and c.

The protein resides in the cell inner membrane. Functionally, produces ATP from ADP in the presence of a proton gradient across the membrane. The gamma chain is believed to be important in regulating ATPase activity and the flow of protons through the CF(0) complex. This chain is ATP synthase gamma chain, found in Burkholderia thailandensis (strain ATCC 700388 / DSM 13276 / CCUG 48851 / CIP 106301 / E264).